The following is a 356-amino-acid chain: MSLVSDLINLNLSDSTDKIIAEYIWVGGSGMDMRSKARTLPGPVTDPSQLPKWNYDGSSTGQAPGEDSEVILYPQAIFKDPFRRGNNILVMCDAYTPAGEPIPTNKRHAAAKVFSNPDVAAEVPWYGIEQEYTLLQKDVKWPVGWPIGGYPGPQGPYYCGIGADKSFGRDVVDSHYKACLYAGINISGINGEVMPGQWEFQVGPAVGISAADEIWVARYILERITEIAGVVVSFDPKPIPGDWNGAGAHCNYSTKSMREEGGYEIIKKAIDKLGLRHKEHIAAYGEGNERRLTGHHETADINTFLWGVANRGASIRVGRDTEKEGKGYFEDRRPASNMDPYIVTSMIAETTILWNP.

An N-acetylserine modification is found at S2. S2 and S48 each carry phosphoserine. Positions 19–99 (IIAEYIWVGG…VMCDAYTPAG (81 aa)) constitute a GS beta-grasp domain. The disordered stretch occupies residues 36-62 (KARTLPGPVTDPSQLPKWNYDGSSTGQ). A GS catalytic domain is found at 106 to 356 (KRHAAAKVFS…IAETTILWNP (251 aa)).

The protein belongs to the glutamine synthetase family. In terms of assembly, homooctamer. Interacts with CRK3 and GRF3. Post-translationally, phosphorylated by CRK3. Expressed in root tips, root hairs and epidermis. Ubiquitously expressed with higher levels in siliques and roots.

It is found in the cytoplasm. It carries out the reaction L-glutamate + NH4(+) + ATP = L-glutamine + ADP + phosphate + H(+). High-affinity glutamine synthetase which catalyzes the synthesis of glutamine from ammonium and glutamate. May contribute to the homeostatic control of glutamine synthesis in roots. This is Glutamine synthetase cytosolic isozyme 1-1 (GLN1-1) from Arabidopsis thaliana (Mouse-ear cress).